An 89-amino-acid chain; its full sequence is Small ribosomal subunit protein uS14 (89 aa).

The protein belongs to the universal ribosomal protein uS14 family. As to quaternary structure, part of the 30S ribosomal subunit. Contacts proteins S3 and S10.

In terms of biological role, binds 16S rRNA, required for the assembly of 30S particles and may also be responsible for determining the conformation of the 16S rRNA at the A site. In Chlorobium phaeobacteroides (strain BS1), this protein is Small ribosomal subunit protein uS14.